A 425-amino-acid chain; its full sequence is Histidine--tRNA ligase (425 aa).

It belongs to the class-II aminoacyl-tRNA synthetase family. As to quaternary structure, homodimer.

It localises to the cytoplasm. It catalyses the reaction tRNA(His) + L-histidine + ATP = L-histidyl-tRNA(His) + AMP + diphosphate + H(+). The polypeptide is Histidine--tRNA ligase (Aeromonas hydrophila subsp. hydrophila (strain ATCC 7966 / DSM 30187 / BCRC 13018 / CCUG 14551 / JCM 1027 / KCTC 2358 / NCIMB 9240 / NCTC 8049)).